Reading from the N-terminus, the 283-residue chain is Acetylglutamate kinase (283 aa).

Substrate contacts are provided by residues 63–64 (GG), Arg-85, and Asn-179.

It belongs to the acetylglutamate kinase family. ArgB subfamily.

The protein localises to the cytoplasm. It catalyses the reaction N-acetyl-L-glutamate + ATP = N-acetyl-L-glutamyl 5-phosphate + ADP. It participates in amino-acid biosynthesis; L-arginine biosynthesis; N(2)-acetyl-L-ornithine from L-glutamate: step 2/4. Functionally, catalyzes the ATP-dependent phosphorylation of N-acetyl-L-glutamate. The polypeptide is Acetylglutamate kinase (Clostridium kluyveri (strain NBRC 12016)).